Reading from the N-terminus, the 190-residue chain is Ribose 1,5-bisphosphate phosphokinase PhnN (190 aa).

10–17 contacts ATP; it reads GPSGSGKD.

The protein belongs to the ribose 1,5-bisphosphokinase family.

The catalysed reaction is alpha-D-ribose 1,5-bisphosphate + ATP = 5-phospho-alpha-D-ribose 1-diphosphate + ADP. It participates in metabolic intermediate biosynthesis; 5-phospho-alpha-D-ribose 1-diphosphate biosynthesis; 5-phospho-alpha-D-ribose 1-diphosphate from D-ribose 5-phosphate (route II): step 3/3. Its function is as follows. Catalyzes the phosphorylation of ribose 1,5-bisphosphate to 5-phospho-D-ribosyl alpha-1-diphosphate (PRPP). In Pseudomonas fluorescens (strain SBW25), this protein is Ribose 1,5-bisphosphate phosphokinase PhnN.